Reading from the N-terminus, the 149-residue chain is Calmodulin (149 aa).

Ala-2 carries the N-acetylalanine modification. EF-hand domains follow at residues 8 to 43, 44 to 79, 81 to 116, and 117 to 149; these read EQIS…LGQN, PTEA…KLKD, DTEE…LGEK, and LTNE…MIAK. Ca(2+)-binding residues include Asp-21, Asp-23, Asp-25, Thr-27, Glu-32, Asp-57, Asp-59, Asn-61, Thr-63, Glu-68, Asp-94, Asp-96, Asp-98, Tyr-100, Glu-105, Asp-130, Asp-132, Asp-134, Gln-136, and Glu-141.

It belongs to the calmodulin family.

The protein resides in the cytoplasm. Its function is as follows. Calmodulin mediates the control of a large number of enzymes, ion channels and other proteins by Ca(2+). Among the enzymes to be stimulated by the calmodulin-Ca(2+) complex are a number of protein kinases and phosphatases. This is Calmodulin from Plasmodium falciparum (isolate 3D7).